The following is a 703-amino-acid chain: Prolyl 3-hydroxylase 2 (703 aa).

Residues 1–21 form the signal peptide; that stretch reads MRESTWVSLLLLLLLPTPQRG. The segment at 17–40 is disordered; it reads TPQRGGPQDGRRSPEPEPERGPLQ. Basic and acidic residues predominate over residues 25-36; it reads DGRRSPEPEPER. 4 TPR repeats span residues 42–75, 144–177, 205–238, and 301–334; these read FDLLYASGVAAYYSGDYERAVRDLEAALSSHRRL, RVPYNYLQRAYIKLNQLEKAMEAAHTFFMANPEH, HLESYNAGVKHYEADDFESAIKYFEQALREYFNE, and PLHYDYLQFAYYRVGEYVKALECAKAYLMFHPDN. N-linked (GlcNAc...) asparagine glycosylation is found at N444 and N544. Positions 552–666 constitute a Fe2OG dioxygenase domain; sequence THMVCRTALS…RCAVALWFTL (115 aa). The Fe cation site is built by H575, D577, and H647. R657 is an active-site residue. Positions 700 to 703 match the Prevents secretion from ER motif; that stretch reads KDEL.

The protein belongs to the leprecan family. Fe cation serves as cofactor. L-ascorbate is required as a cofactor. In terms of tissue distribution, detected in kidney. Detected on kidney tubular cells, pancreas acinar cells, Schwann cells of the peripheral nerve in the pinna, and in tunica adventitia, the smooth muscle layer of the aortic wall (at protein level). Detected in lung, skeletal muscle and kidney. Detected in kidney glomeruli and in prehypertrophic regions of long bone from neonates. In the eye, detected in the epithelial layer of the cornea and at lower levels in the sclera at the posterior end of the eye.

The protein resides in the endoplasmic reticulum. Its subcellular location is the sarcoplasmic reticulum. The protein localises to the golgi apparatus. It catalyses the reaction L-prolyl-[collagen] + 2-oxoglutarate + O2 = trans-3-hydroxy-L-prolyl-[collagen] + succinate + CO2. Its function is as follows. Prolyl 3-hydroxylase that catalyzes the post-translational formation of 3-hydroxyproline on collagens. Contributes to proline 3-hydroxylation of collagen COL4A1 and COL1A1 in tendons, the eye sclera and in the eye lens capsule. Has high activity with the type IV collagen COL4A1, and lower activity with COL1A1. Catalyzes hydroxylation of the first Pro in Gly-Pro-Hyp sequences where Hyp is 4-hydroxyproline. Has no activity on substrates that have proline instead of 4-hydroxyproline in the third position. This chain is Prolyl 3-hydroxylase 2, found in Mus musculus (Mouse).